The chain runs to 440 residues: Alpha-ionylideneethane synthase aba3 (440 aa).

It belongs to the alpha-ionylideneethane synthase family.

It participates in hormone biosynthesis. In terms of biological role, alpha-ionylideneethane synthase; part of the gene cluster that mediates the biosynthesis of abscisic acid (ABA), a phytohormone that acts antagonistically toward salicylic acid (SA), jasmonic acid (JA) and ethylene (ETH) signaling, to impede plant defense responses. The first step of the pathway catalyzes the reaction from farnesyl diphosphate to alpha-ionylideneethane performed by the alpha-ionylideneethane synthase aba3 via a three-step reaction mechanism involving 2 neutral intermediates, beta-farnesene and allofarnesene. The cytochrome P450 monooxygenase aba1 might then be involved in the conversion of alpha-ionylideneethane to alpha-ionylideneacetic acid. Alpha-ionylideneacetic acid is further converted to abscisic acid in 2 steps involving the cytochrome P450 monooxygenase aba2 and the short-chain dehydrogenase/reductase aba4, via the intermediates 1'-deoxy-ABA or 1',4'-trans-diol-ABA, depending on the order of action of these 2 enzymes. Aba2 is responsible for the hydroxylation of carbon atom C-1' and aba4 might be involved in the oxidation of the C-4' carbon atom. In Botryotinia fuckeliana (strain B05.10) (Noble rot fungus), this protein is Alpha-ionylideneethane synthase aba3.